Reading from the N-terminus, the 492-residue chain is Sestrin-1 (492 aa).

The N-terminal domain; may mediate the alkylhydroperoxide reductase activity stretch occupies residues 71–252; the sequence is FADSFAALGR…ICDITNGNHS (182 aa). Cysteine 130 functions as the Cysteine sulfenic acid (-SOH) intermediate in the catalytic mechanism. Phosphoserine is present on residues serine 293 and serine 314. The segment at 321–492 is C-terminal domain; mediates TORC1 regulation; it reads PARDVSRHFE…ALRAITRYMT (172 aa). L-leucine-binding positions include 386–389, threonine 398, and glutamate 463; that span reads TYNT.

The protein belongs to the sestrin family. As to quaternary structure, interacts with the GATOR2 complex which is composed of MIOS, SEC13, SEH1L, WDR24 and WDR59; the interaction is negatively regulated by leucine. Interacts with RRAGA, RRAGB, RRAGC and RRAGD; may function as a guanine nucleotide dissociation inhibitor for RRAGs and regulate them. Interacts with KEAP1, RBX1 and SQSTM1; in the SQSTM1-dependent autophagic degradation of KEAP1. May interact with PRDX1.

The protein localises to the nucleus. Its subcellular location is the cytoplasm. The enzyme catalyses a hydroperoxide + L-cysteinyl-[protein] = S-hydroxy-L-cysteinyl-[protein] + an alcohol. Its function is as follows. Functions as an intracellular leucine sensor that negatively regulates the TORC1 signaling pathway through the GATOR complex. In absence of leucine, binds the GATOR subcomplex GATOR2 and prevents TORC1 signaling. Binding of leucine to SESN2 disrupts its interaction with GATOR2 thereby activating the TORC1 signaling pathway. This stress-inducible metabolic regulator may also play a role in protection against oxidative and genotoxic stresses. May positively regulate the transcription by NFE2L2 of genes involved in the response to oxidative stress by facilitating the SQSTM1-mediated autophagic degradation of KEAP1. Moreover, may prevent the accumulation of reactive oxygen species (ROS) through the alkylhydroperoxide reductase activity born by the N-terminal domain of the protein. Was originally reported to contribute to oxidative stress resistance by reducing PRDX1. However, this could not be confirmed. This is Sestrin-1 from Macaca fascicularis (Crab-eating macaque).